We begin with the raw amino-acid sequence, 121 residues long: Large ribosomal subunit protein uL14c (121 aa).

It belongs to the universal ribosomal protein uL14 family. In terms of assembly, part of the 50S ribosomal subunit.

It localises to the plastid. Its subcellular location is the chloroplast. Functionally, binds to 23S rRNA. The sequence is that of Large ribosomal subunit protein uL14c from Oedogonium cardiacum (Filamentous green alga).